The chain runs to 96 residues: uncharacterized protein (96 aa).

Functionally, essential for virus function. This is an uncharacterized protein from Saccharolobus solfataricus (Sulfolobus solfataricus).